Reading from the N-terminus, the 453-residue chain is MSNDLPTKKDLVKWDQEDALNWTRGEYEIPNSKACGGEADGKAIYFCGNSLGLLNKKARQHIMEELDVWSTSSVTGHFNHPYQRPWKHVDEPLTPHLAKLVGAREEEVAHTSTLTSNMHNLFTSFYQPTEKRWKIVIEKGSFPSDWYAVHSHPRLHDKVLRPEQIDNAIIALVPREGEDTLRTEDILKVLDDNKDSIAIVWLPLVQYYTGQLFDISSISPKVHEIGALLGLDMAHGIGNVECKLNEWNVDFAVWCTYKYLNAGPAAIGGFYIRSGLEDGGRRLAGWWGNDARTRFHMSPNFQPTPGAKGYQHSCTPVFSSIPLLATLQLIEAVGFSNMVEKARRLTGTLEALLKASRYYVHPADPKGKIGFKIITPAAPYRGTQLSLVILPEEEHVMPKVFDRMLRKGLVGDERKPSVIRLSPVVLYNTFEEVGRAVEIVEEALEEEEEERKR.

Pyridoxal 5'-phosphate-binding positions include Leu-114, Thr-115, 142–145 (FPSD), Asp-232, His-235, and Tyr-257. An N6-(pyridoxal phosphate)lysine modification is found at Lys-258. Trp-286 contributes to the pyridoxal 5'-phosphate binding site.

The protein belongs to the kynureninase family. Homodimer. Requires pyridoxal 5'-phosphate as cofactor.

The protein localises to the cytoplasm. The enzyme catalyses L-kynurenine + H2O = anthranilate + L-alanine + H(+). It catalyses the reaction 3-hydroxy-L-kynurenine + H2O = 3-hydroxyanthranilate + L-alanine + H(+). The protein operates within amino-acid degradation; L-kynurenine degradation; L-alanine and anthranilate from L-kynurenine: step 1/1. It participates in cofactor biosynthesis; NAD(+) biosynthesis; quinolinate from L-kynurenine: step 2/3. Functionally, catalyzes the cleavage of L-kynurenine (L-Kyn) and L-3-hydroxykynurenine (L-3OHKyn) into anthranilic acid (AA) and 3-hydroxyanthranilic acid (3-OHAA), respectively. This Cryptococcus neoformans var. neoformans serotype D (strain B-3501A) (Filobasidiella neoformans) protein is Kynureninase.